Reading from the N-terminus, the 389-residue chain is Pyruvate dehydrogenase E1 component subunit alpha-1, mitochondrial (389 aa).

A mitochondrion-targeting transit peptide spans M1–I32. Pyruvate is bound by residues H90, Y116, R117, G165, V167, D196, G197, A198, N225, and Y227. Residues Y116, R117, G165, V167, D196, G197, A198, and N225 each coordinate thiamine diphosphate. D196 serves as a coordination point for Mg(2+). Mg(2+) is bound by residues N225 and Y227. H291 lines the thiamine diphosphate pocket.

As to quaternary structure, tetramer of 2 alpha and 2 beta subunits. The cofactor is thiamine diphosphate. Mg(2+) is required as a cofactor. Expressed in roots, rosettes and flowers.

The protein resides in the mitochondrion matrix. It catalyses the reaction N(6)-[(R)-lipoyl]-L-lysyl-[protein] + pyruvate + H(+) = N(6)-[(R)-S(8)-acetyldihydrolipoyl]-L-lysyl-[protein] + CO2. E1 activity is regulated by phosphorylation (inactivation) and dephosphorylation (activation) of the alpha subunit. Its function is as follows. The pyruvate dehydrogenase complex catalyzes the overall conversion of pyruvate to acetyl-CoA and CO(2). It contains multiple copies of three enzymatic components: pyruvate dehydrogenase (E1), dihydrolipoamide acetyltransferase (E2) and lipoamide dehydrogenase (E3). The protein is Pyruvate dehydrogenase E1 component subunit alpha-1, mitochondrial (E1 ALPHA) of Arabidopsis thaliana (Mouse-ear cress).